The following is a 937-amino-acid chain: Isoleucine--tRNA ligase (937 aa).

The 'HIGH' region signature appears at 58–68 (PYANGHIHLGT). Glutamate 566 lines the L-isoleucyl-5'-AMP pocket. The 'KMSKS' region motif lies at 607–611 (KMSKS). Lysine 610 is an ATP binding site. Zn(2+)-binding residues include cysteine 906, cysteine 909, cysteine 925, and cysteine 928.

This sequence belongs to the class-I aminoacyl-tRNA synthetase family. IleS type 1 subfamily. As to quaternary structure, monomer. It depends on Zn(2+) as a cofactor.

The protein localises to the cytoplasm. It carries out the reaction tRNA(Ile) + L-isoleucine + ATP = L-isoleucyl-tRNA(Ile) + AMP + diphosphate. In terms of biological role, catalyzes the attachment of isoleucine to tRNA(Ile). As IleRS can inadvertently accommodate and process structurally similar amino acids such as valine, to avoid such errors it has two additional distinct tRNA(Ile)-dependent editing activities. One activity is designated as 'pretransfer' editing and involves the hydrolysis of activated Val-AMP. The other activity is designated 'posttransfer' editing and involves deacylation of mischarged Val-tRNA(Ile). In Lawsonia intracellularis (strain PHE/MN1-00), this protein is Isoleucine--tRNA ligase.